The primary structure comprises 38 residues: Potassium channel toxin alpha-KTx 3.17 (38 aa).

Intrachain disulfides connect cysteine 8–cysteine 28, cysteine 14–cysteine 33, and cysteine 18–cysteine 35.

The protein belongs to the short scorpion toxin superfamily. Potassium channel inhibitor family. Alpha-KTx 03 subfamily. As to expression, expressed by the venom gland.

It localises to the secreted. Completely inhibits the (125)I-kaliotoxin binding on rat brain synaptosomes with high-affinity (IC(50)=0.1 nM). Is a potent Kv1.3/KCNA3 ligand. The sequence is that of Potassium channel toxin alpha-KTx 3.17 from Buthus paris (Scorpion).